We begin with the raw amino-acid sequence, 194 residues long: Adenylate kinase isoenzyme 1 (194 aa).

Methionine 1 carries the post-translational modification N-acetylmethionine. 18–23 (GSGKGT) is an ATP binding site. The residue at position 38 (serine 38) is a Phosphoserine. Positions 38 to 67 (STGDLLRSEVSSGSARGKKLSEIMEKGQLV) are NMP. AMP-binding positions include threonine 39, arginine 44, 65–67 (QLV), 94–97 (GYPR), and glutamine 101. The segment at 131–141 (KRGETSGRVDD) is LID. Position 132 (arginine 132) interacts with ATP. AMP contacts are provided by arginine 138 and arginine 149. ATP is bound at residue glycine 177.

This sequence belongs to the adenylate kinase family. AK1 subfamily. In terms of assembly, monomer. It depends on Mg(2+) as a cofactor.

It localises to the cytoplasm. It catalyses the reaction a ribonucleoside 5'-phosphate + ATP = a ribonucleoside 5'-diphosphate + ADP. The enzyme catalyses AMP + ATP = 2 ADP. It carries out the reaction dAMP + ATP = dADP + ADP. The catalysed reaction is dATP + AMP = dADP + ADP. It catalyses the reaction dAMP + dATP = 2 dADP. The enzyme catalyses a 2'-deoxyribonucleoside 5'-diphosphate + ATP = a 2'-deoxyribonucleoside 5'-triphosphate + ADP. It carries out the reaction a ribonucleoside 5'-diphosphate + ATP = a ribonucleoside 5'-triphosphate + ADP. The catalysed reaction is CDP + GTP = CTP + GDP. It catalyses the reaction GDP + ATP = GTP + ADP. The enzyme catalyses UDP + ATP = UTP + ADP. It carries out the reaction GTP + UDP = UTP + GDP. The catalysed reaction is dTDP + GTP = dTTP + GDP. It catalyses the reaction dCDP + GTP = dCTP + GDP. The enzyme catalyses dGDP + ATP = dGTP + ADP. It carries out the reaction dADP + GTP = dATP + GDP. The catalysed reaction is thiamine diphosphate + ADP = thiamine triphosphate + AMP. Functionally, catalyzes the reversible transfer of the terminal phosphate group between ATP and AMP. Also displays broad nucleoside diphosphate kinase activity. Plays an important role in cellular energy homeostasis and in adenine nucleotide metabolism. Also catalyzes at a very low rate the synthesis of thiamine triphosphate (ThTP) from thiamine diphosphate (ThDP) and ADP. This is Adenylate kinase isoenzyme 1 from Homo sapiens (Human).